Reading from the N-terminus, the 693-residue chain is Cyclin-dependent kinase G-1 (693 aa).

A compositionally biased stretch (gly residues) spans 1–10; that stretch reads MAAGSHGGYR. Disordered regions lie at residues 1 to 148 and 236 to 308; these read MAAG…ARDP and KKKK…DDYP. Basic and acidic residues predominate over residues 13 to 24; it reads EVAREREHDVGV. Basic residues predominate over residues 26-39; sequence RRSKEHYHHRHPSR. 3 stretches are compositionally biased toward basic and acidic residues: residues 40 to 54, 75 to 87, and 97 to 122; these read HRDS…RSGG, RPSE…REPG, and RSGE…EEAK. Over residues 268–284 the composition is skewed to low complexity; it reads SVRSSSRSSDSGVLQGS. Positions 287–304 are enriched in basic and acidic residues; that stretch reads RDLEVEKGDNIDVEKAAD. The Protein kinase domain occupies 349 to 640; that stretch reads FERLNTINEG…AEDALNHEWF (292 aa). ATP is bound by residues 355-363 and Lys-378; that span reads INEGTYGVV. Phosphothreonine is present on Thr-359. At Tyr-360 the chain carries Phosphotyrosine. Asp-473 serves as the catalytic Proton acceptor. Ser-500 carries the post-translational modification Phosphoserine. Thr-506 is modified (phosphothreonine). Positions 664–693 are disordered; it reads RFKKHMKSPDPLEEQWMKEQGNNGDRGLFG.

The protein belongs to the protein kinase superfamily. CMGC Ser/Thr protein kinase family. CDC2/CDKX subfamily.

The enzyme catalyses L-seryl-[protein] + ATP = O-phospho-L-seryl-[protein] + ADP + H(+). It catalyses the reaction L-threonyl-[protein] + ATP = O-phospho-L-threonyl-[protein] + ADP + H(+). The catalysed reaction is [DNA-directed RNA polymerase] + ATP = phospho-[DNA-directed RNA polymerase] + ADP + H(+). The protein is Cyclin-dependent kinase G-1 (CDKG-1) of Oryza sativa subsp. indica (Rice).